Here is a 239-residue protein sequence, read N- to C-terminus: Large ribosomal subunit protein uL2 (239 aa).

Disordered regions lie at residues methionine 1–proline 20 and proline 203–lysine 239. Over residues proline 222–lysine 239 the composition is skewed to basic residues.

This sequence belongs to the universal ribosomal protein uL2 family. As to quaternary structure, part of the 50S ribosomal subunit. Forms a bridge to the 30S subunit in the 70S ribosome.

One of the primary rRNA binding proteins. Required for association of the 30S and 50S subunits to form the 70S ribosome, for tRNA binding and peptide bond formation. It has been suggested to have peptidyltransferase activity; this is somewhat controversial. Makes several contacts with the 16S rRNA in the 70S ribosome. This Pyrococcus horikoshii (strain ATCC 700860 / DSM 12428 / JCM 9974 / NBRC 100139 / OT-3) protein is Large ribosomal subunit protein uL2.